Here is a 419-residue protein sequence, read N- to C-terminus: E3 ubiquitin-protein ligase pellino homolog 2 (419 aa).

Residues 15–202 (EPVKYRELVV…HPQGGFTEES (188 aa)) form the FHA; atypical domain.

It belongs to the pellino family. As to quaternary structure, interacts with TRAF6, IRAK4 and MAP3K7. Interacts with IRAK1. Interacts with BCL10; this interaction is impaired by SOCS3. Phosphorylated by IRAK1 and IRAK4 enhancing its E3 ligase activity. Widely expressed both in embryos and adult. Weakly or not expressed in spleen and thymus.

The catalysed reaction is S-ubiquitinyl-[E2 ubiquitin-conjugating enzyme]-L-cysteine + [acceptor protein]-L-lysine = [E2 ubiquitin-conjugating enzyme]-L-cysteine + N(6)-ubiquitinyl-[acceptor protein]-L-lysine.. It functions in the pathway protein modification; protein ubiquitination. Its function is as follows. E3 ubiquitin ligase catalyzing the covalent attachment of ubiquitin moieties onto substrate proteins. Involved in the TLR and IL-1 signaling pathways via interaction with the complex containing IRAK kinases and TRAF6. Mediates IL1B-induced IRAK1 'Lys-63'-linked polyubiquitination and possibly 'Lys-48'-linked ubiquitination. May be important for LPS- and IL1B-induced MAP3K7-dependent, but not MAP3K3-dependent, NF-kappa-B activation. Can activate the MAP (mitogen activated protein) kinase pathway leading to activation of ELK1. This chain is E3 ubiquitin-protein ligase pellino homolog 2 (Peli2), found in Mus musculus (Mouse).